The sequence spans 633 residues: Kinesin-like motor protein 9 (633 aa).

One can recognise a Kinesin motor domain in the interval 1 to 392 (MIQIFLRVKK…MRYSANAREI (392 aa)). 94 to 101 (GVSGAGKT) serves as a coordination point for ATP. 3 disordered regions span residues 393-423 (LPPPLNENSGSQSPSHSLLQKSKNTSSTKAL), 531-556 (LEEESIKESSATQQNENQHKRSSRKL), and 575-633 (KLWP…INEL). A compositionally biased stretch (polar residues) spans 398-423 (NENSGSQSPSHSLLQKSKNTSSTKAL). Residues 417-541 (TSSTKALTSH…EEESIKESSA (125 aa)) adopt a coiled-coil conformation. The segment covering 578-587 (PQSTLIQAPN) has biased composition (polar residues). Residues 604–623 (VSPIKPLSPSRRPPLTSLYS) show a composition bias toward low complexity. Phosphoserine is present on residues Ser605, Ser611, and Ser613. The span at 624–633 (GTTDIDINEL) shows a compositional bias: polar residues.

Belongs to the TRAFAC class myosin-kinesin ATPase superfamily. Kinesin family. Interacts with ase1. In terms of processing, phosphorylated by cdc2 and dephosphorylated by clp1. Dephosphorylation is required for the interaction with ase1.

The protein resides in the nucleus. It localises to the cytoplasm. Its subcellular location is the cytoskeleton. It is found in the microtubule organizing center. The protein localises to the spindle pole body. Functionally, kinesin-like motor protein involved in anaphase B spindle elongation. In Schizosaccharomyces pombe (strain 972 / ATCC 24843) (Fission yeast), this protein is Kinesin-like motor protein 9 (klp9).